The chain runs to 384 residues: UDP-N-acetylglucosamine--N-acetylmuramyl-(pentapeptide) pyrophosphoryl-undecaprenol N-acetylglucosamine transferase (384 aa).

Residues 22-24 (TGG), R179, S209, and Q312 contribute to the UDP-N-acetyl-alpha-D-glucosamine site.

Belongs to the glycosyltransferase 28 family. MurG subfamily.

It is found in the cell inner membrane. The enzyme catalyses di-trans,octa-cis-undecaprenyl diphospho-N-acetyl-alpha-D-muramoyl-L-alanyl-D-glutamyl-meso-2,6-diaminopimeloyl-D-alanyl-D-alanine + UDP-N-acetyl-alpha-D-glucosamine = di-trans,octa-cis-undecaprenyl diphospho-[N-acetyl-alpha-D-glucosaminyl-(1-&gt;4)]-N-acetyl-alpha-D-muramoyl-L-alanyl-D-glutamyl-meso-2,6-diaminopimeloyl-D-alanyl-D-alanine + UDP + H(+). Its pathway is cell wall biogenesis; peptidoglycan biosynthesis. In terms of biological role, cell wall formation. Catalyzes the transfer of a GlcNAc subunit on undecaprenyl-pyrophosphoryl-MurNAc-pentapeptide (lipid intermediate I) to form undecaprenyl-pyrophosphoryl-MurNAc-(pentapeptide)GlcNAc (lipid intermediate II). This is UDP-N-acetylglucosamine--N-acetylmuramyl-(pentapeptide) pyrophosphoryl-undecaprenol N-acetylglucosamine transferase from Treponema pallidum (strain Nichols).